A 606-amino-acid chain; its full sequence is Putative auxin response factor 21 (606 aa).

Residues 126 to 228 (FTKVLTASDT…ELRVGIRRAR (103 aa)) constitute a DNA-binding region (TF-B3). In terms of domain architecture, PB1 spans 511–592 (RTCTKVQMQG…MVKKILIYSK (82 aa)).

The protein belongs to the ARF family. In terms of assembly, homodimers and heterodimers.

It localises to the nucleus. Functionally, auxin response factors (ARFs) are transcriptional factors that bind specifically to the DNA sequence 5'-TGTCTC-3' found in the auxin-responsive promoter elements (AuxREs). Could act as transcriptional activator or repressor. Formation of heterodimers with Aux/IAA proteins may alter their ability to modulate early auxin response genes expression. The chain is Putative auxin response factor 21 (ARF21) from Arabidopsis thaliana (Mouse-ear cress).